Reading from the N-terminus, the 1553-residue chain is Sodium channel protein PaFPC1 (1553 aa).

Positions 1–68 (MADNSPLIRE…SAHPDQALEQ (68 aa)) are disordered. Residues 1 to 140 (MADNSPLIRE…RVAISTMVQP (140 aa)) are Cytoplasmic-facing. The span at 34-60 (ENGKTEENKDNSRDKGRGANKDRDGSA) shows a compositional bias: basic and acidic residues. The helical transmembrane segment at 141–159 (IFSYFIMITILIHCIFMIM) threads the bilayer. The Extracellular portion of the chain corresponds to 160–165 (PATQTT). Residues 166–186 (YILELVFLSIYTIEVVVKVLA) traverse the membrane as a helical segment. Residues 187–200 (RGFILHPFAYLRDP) are Cytoplasmic-facing. Residues 201 to 218 (WNWLDFLVTLIGYITLVV) form a helical membrane-spanning segment. Residues 219–224 (DLGHLY) lie on the Extracellular side of the membrane. A helical membrane pass occupies residues 225–241 (ALRAFRVLRSWRTVTIV). Residues 242–260 (PGWRTIVDALSLSITSLKD) lie on the Cytoplasmic side of the membrane. Residues 261–280 (LVLLLLFSLFVFAVLGLQIY) form a helical membrane-spanning segment. The Extracellular segment spans residues 281–360 (MGVLTQKCVK…PNYGYTSFDT (80 aa)). Cystine bridges form between cysteine 288–cysteine 337 and cysteine 328–cysteine 343. Residues asparagine 300, asparagine 308, asparagine 312, and asparagine 330 are each glycosylated (N-linked (GlcNAc...) asparagine). Residues 361–385 (FGWAFLSVFRLVTLDYWEDLYQLAL) constitute an intramembrane region (pore-forming). Glutamate 378 lines the saxitoxin pocket. Residues 386 to 392 (RSAGPWH) are Extracellular-facing. A helical membrane pass occupies residues 393–413 (ILFFIIVVFYGTFCFLNFILA). Residues 414–519 (VVVMSYTHMV…GAIGAVVLSP (106 aa)) are Cytoplasmic-facing. A helical membrane pass occupies residues 520–538 (FFELFIAVIIVLNITFMAL). Over 539–549 (DHHDMNIEFER) the chain is Extracellular. Residues 550–569 (ILRTGNYIFTSIYIVEAVLK) form a helical membrane-spanning segment. The Cytoplasmic portion of the chain corresponds to 570–583 (IIALSPKFYFKDSW). Residues 584–603 (NVFDFIIVVFAILELGLEGV) form a helical membrane-spanning segment. The Extracellular segment spans residues 604-605 (QG). Residues 606-623 (LSVFRSFRLLRVFRLAKF) traverse the membrane as a helical segment. Topologically, residues 624 to 639 (WPTLNNFMSVMTKSYG) are cytoplasmic. A helical membrane pass occupies residues 640 to 658 (AFVNVMYVMFLLLFIFAII). Residues 659 to 686 (GMQLFGMNYIDNMERFPDGDLPRWNFTD) are Extracellular-facing. Asparagine 683 carries an N-linked (GlcNAc...) asparagine glycan. The segment at residues 687 to 707 (FLHSFMIVFRALCGEWIESMW) is an intramembrane region (pore-forming). The tetrodotoxin site is built by glutamate 701 and glutamate 704. Residue glutamate 704 participates in saxitoxin binding. At 708–719 (DCMLVGDWSCIP) the chain is on the extracellular side. An intrachain disulfide couples cysteine 709 to cysteine 717. The helical transmembrane segment at 720 to 740 (FFVAVFFVGNLVILNLLIALL) threads the bilayer. The Cytoplasmic portion of the chain corresponds to 741–857 (LNNYGSFCTS…VCFLLAKNKY (117 aa)). A helical membrane pass occupies residues 858–875 (FQKFVTAVLVITSVLLAL). The Extracellular portion of the chain corresponds to 876–888 (EDIYLPQRPVLVN). The chain crosses the membrane as a helical span at residues 889–907 (ITLYVDYVLTAFFVIEMII). Over 908 to 921 (MLFAVGFKKYFTSK) the chain is Cytoplasmic. Residues 922–940 (WYWLDFIVVVAYLLNFVLM) form a helical membrane-spanning segment. Over 941–945 (CAGIE) the chain is Extracellular. Residues 946-964 (ALQTLRLLRVFRLFRPLSK) form a helical membrane-spanning segment. The Cytoplasmic portion of the chain corresponds to 965–981 (VNGMQVVTSTLVEAVPH). A helical membrane pass occupies residues 982 to 1001 (IFNVILVGIFFWLVFAIMGV). The Extracellular portion of the chain corresponds to 1002-1047 (QLFAGKFYKCVDENSTVLSHEITMDRNDCLHENYTWENSPMNFDHV). The cysteines at positions 1011 and 1030 are disulfide-linked. N-linked (GlcNAc...) asparagine glycosylation occurs at asparagine 1015. Residue asparagine 1028 is glycosylated (N-linked (GlcNAc...) asparagine; atypical). Asparagine 1034 is a glycosylation site (N-linked (GlcNAc...) asparagine). The segment at residues 1048 to 1069 (GNAYLSLLQVATFKGWLQIMND) is an intramembrane region (pore-forming). A tetrodotoxin-binding site is contributed by glycine 1062. Residue tryptophan 1063 participates in saxitoxin binding. Topologically, residues 1070–1086 (AIDSREVHKQPIRETNI) are extracellular. A helical transmembrane segment spans residues 1087-1108 (YMYLYFIFFIVFGSFFILKLFV). The Cytoplasmic segment spans residues 1109-1171 (CILIDIFRQQ…LMYDISVNRK (63 aa)). The interval 1133–1146 (QLIYRRAVMRTMSA) is linker region that may regulate channel inactivation. The helical transmembrane segment at 1172-1189 (FEYTMMILIILNVAVMAI) threads the bilayer. Over 1190 to 1200 (DHYGQSMEFSE) the chain is Extracellular. A helical transmembrane segment spans residues 1201-1219 (VLDYLNLIFIIIFFVECVI). At 1220 to 1231 (KVSGLRHHYFKD) the chain is on the cytoplasmic side. The chain crosses the membrane as a helical span at residues 1232 to 1249 (PWNIIDFLYVVLAIAGLM). Over 1250 to 1262 (LSDVIEKYFISPT) the chain is Extracellular. The chain crosses the membrane as a helical span at residues 1263–1279 (LLRILRILRVGRLLRYF). The Cytoplasmic segment spans residues 1280–1298 (QSARGMRLLLLALRKALRT). Residues 1299 to 1316 (LFNVSFLLFVIMFVYAVF) form a helical membrane-spanning segment. The Extracellular segment spans residues 1317–1338 (GMEFFMHIRDAGAIDDVYNFKT). An intramembrane region (pore-forming) is located at residues 1339-1361 (FGQSIILLFQLATSAGWDGVYFA). The tetrodotoxin site is built by glycine 1354 and aspartate 1356. Aspartate 1356 contributes to the saxitoxin binding site. Residues 1362–1387 (IANEEDCRAPDHELGYPGNCGSRALG) are Extracellular-facing. A disulfide bridge links cysteine 1368 with cysteine 1381. The helical transmembrane segment at 1388 to 1410 (IAYLVSYLIITCLVVINMYAAVI) threads the bilayer. The Cytoplasmic portion of the chain corresponds to 1411–1553 (LDYVLEVYED…NAWRKHKQQN (143 aa)).

It belongs to the sodium channel (TC 1.A.1.10) family. Detected in adult nerve cord, muscle, gut and mushroom-shaped accessory glands.

The protein resides in the cell membrane. Its activity is regulated as follows. Inhibited by the pore blockers saxitoxin and tetrodotoxin. In terms of biological role, mediates the voltage-dependent sodium ion permeability of excitable membranes. This Periplaneta americana (American cockroach) protein is Sodium channel protein PaFPC1.